The chain runs to 238 residues: Ion-translocating oxidoreductase complex subunit E (238 aa).

Transmembrane regions (helical) follow at residues leucine 41–valine 61, leucine 71–alanine 91, glutamate 95–glycine 115, serine 130–leucine 150, and glycine 184–leucine 204.

The protein belongs to the NqrDE/RnfAE family. In terms of assembly, the complex is composed of six subunits: RnfA, RnfB, RnfC, RnfD, RnfE and RnfG.

Its subcellular location is the cell inner membrane. Functionally, part of a membrane-bound complex that couples electron transfer with translocation of ions across the membrane. In Pseudomonas aeruginosa (strain UCBPP-PA14), this protein is Ion-translocating oxidoreductase complex subunit E.